A 295-amino-acid chain; its full sequence is Proline iminopeptidase (295 aa).

One can recognise an AB hydrolase-1 domain in the interval 35 to 279 (TLHGGPGMSH…ACSHLTMWED (245 aa)). The active-site Nucleophile is the Ser-107. Asp-246 is a catalytic residue. Catalysis depends on His-273, which acts as the Proton donor.

The protein belongs to the peptidase S33 family. As to quaternary structure, part of the tricorn proteolytic complex.

The enzyme catalyses Release of N-terminal proline from a peptide.. Functionally, cleaves H-Pro-AMC as well as a wide spectrum of amino acid substrates and several peptide substrates without a proline at the N-terminus. In conjunction with the three factors F1, F2 and F3, Tricorn degrades oligopeptides in a sequential manner, yielding free amino acids. The chain is Proline iminopeptidase (pip) from Thermoplasma volcanium (strain ATCC 51530 / DSM 4299 / JCM 9571 / NBRC 15438 / GSS1).